The sequence spans 38 residues: uncharacterized protein (38 aa).

It belongs to the asfivirus C84L family.

This is an uncharacterized protein from Ornithodoros (relapsing fever ticks).